The chain runs to 437 residues: Methylenetetrahydrofolate--tRNA-(uracil-5-)-methyltransferase TrmFO (437 aa).

G10–G15 serves as a coordination point for FAD.

This sequence belongs to the MnmG family. TrmFO subfamily. Requires FAD as cofactor.

Its subcellular location is the cytoplasm. The enzyme catalyses uridine(54) in tRNA + (6R)-5,10-methylene-5,6,7,8-tetrahydrofolate + NADH + H(+) = 5-methyluridine(54) in tRNA + (6S)-5,6,7,8-tetrahydrofolate + NAD(+). It catalyses the reaction uridine(54) in tRNA + (6R)-5,10-methylene-5,6,7,8-tetrahydrofolate + NADPH + H(+) = 5-methyluridine(54) in tRNA + (6S)-5,6,7,8-tetrahydrofolate + NADP(+). In terms of biological role, catalyzes the folate-dependent formation of 5-methyl-uridine at position 54 (M-5-U54) in all tRNAs. The sequence is that of Methylenetetrahydrofolate--tRNA-(uracil-5-)-methyltransferase TrmFO from Geotalea daltonii (strain DSM 22248 / JCM 15807 / FRC-32) (Geobacter daltonii).